The following is a 329-amino-acid chain: Ribosomal RNA small subunit methyltransferase H (329 aa).

S-adenosyl-L-methionine contacts are provided by residues 39-41 (GGY), Asp56, Phe85, Asp106, and Gln113. Residues 289–308 (SGAIRPTPEEEARNPRARSA) are disordered.

Belongs to the methyltransferase superfamily. RsmH family.

It is found in the cytoplasm. The enzyme catalyses cytidine(1402) in 16S rRNA + S-adenosyl-L-methionine = N(4)-methylcytidine(1402) in 16S rRNA + S-adenosyl-L-homocysteine + H(+). Functionally, specifically methylates the N4 position of cytidine in position 1402 (C1402) of 16S rRNA. The polypeptide is Ribosomal RNA small subunit methyltransferase H (Novosphingobium aromaticivorans (strain ATCC 700278 / DSM 12444 / CCUG 56034 / CIP 105152 / NBRC 16084 / F199)).